Reading from the N-terminus, the 547-residue chain is Elongator complex protein 3 (547 aa).

The Radical SAM core domain occupies 82 to 372 (RTASGIAVVA…YRVQRDIPMP (291 aa)). [4Fe-4S] cluster contacts are provided by Cys-99, Cys-109, and Cys-112. At Ser-161 the chain carries Phosphoserine. Lys-164 lines the acetyl-CoA pocket. Lys-229 is subject to N6-methyllysine. Phosphotyrosine is present on Tyr-251. Positions 396-547 (IQCRDVRTRE…QGPYMVKMLK (152 aa)) constitute an N-acetyltransferase domain. Residues 474-477 (ELHV), 497-499 (FGM), and Tyr-530 contribute to the acetyl-CoA site.

Belongs to the ELP3 family. Component of the elongator complex which consists of ELP1, ELP2, ELP3, ELP4, ELP5 and ELP6. ELP1, ELP2 and ELP3 form the elongator core complex. Interacts with alpha-tubulin. It depends on [4Fe-4S] cluster as a cofactor. In terms of processing, tyrosine-phosphorylated. Also serine/threonine-phosphorylated.

Its subcellular location is the cytoplasm. It localises to the nucleus. The enzyme catalyses uridine(34) in tRNA + acetyl-CoA + S-adenosyl-L-methionine + H2O = 5-(carboxymethyl)uridine(34) in tRNA + 5'-deoxyadenosine + L-methionine + CoA + 2 H(+). Its pathway is tRNA modification; 5-methoxycarbonylmethyl-2-thiouridine-tRNA biosynthesis. Its function is as follows. Catalytic tRNA acetyltransferase subunit of the elongator complex which is required for multiple tRNA modifications, including mcm5U (5-methoxycarbonylmethyl uridine), mcm5s2U (5-methoxycarbonylmethyl-2-thiouridine), and ncm5U (5-carbamoylmethyl uridine). In the elongator complex, acts as a tRNA uridine(34) acetyltransferase by mediating formation of carboxymethyluridine in the wobble base at position 34 in tRNAs. May also act as a protein lysine acetyltransferase by mediating acetylation of target proteins; such activity is however unclear in vivo and recent evidences suggest that ELP3 primarily acts as a tRNA acetyltransferase. Involved in neurogenesis: regulates the migration and branching of projection neurons in the developing cerebral cortex, through a process depending on alpha-tubulin acetylation. Required for acetylation of GJA1 in the developing cerebral cortex. This chain is Elongator complex protein 3, found in Mus musculus (Mouse).